Reading from the N-terminus, the 210-residue chain is Small ribosomal subunit protein uS4 (210 aa).

Residues 99–161 enclose the S4 RNA-binding domain; it reads RRLDSVIYRM…SKNNATILSA (63 aa).

Belongs to the universal ribosomal protein uS4 family. Part of the 30S ribosomal subunit. Contacts protein S5. The interaction surface between S4 and S5 is involved in control of translational fidelity.

Its function is as follows. One of the primary rRNA binding proteins, it binds directly to 16S rRNA where it nucleates assembly of the body of the 30S subunit. With S5 and S12 plays an important role in translational accuracy. This chain is Small ribosomal subunit protein uS4, found in Solibacter usitatus (strain Ellin6076).